We begin with the raw amino-acid sequence, 165 residues long: MDPVNFIKTYAPRGSIIFINYTMSLTSHLNPSIEKHVGIYYGTLLSEHLVVESTYRKGVRIVPLDSFFEGYLSAKVYMLENIQVMKIAADTSLTLLGIPYGFGHNRMYCFKLVADCYKNAGVETSSKRILGKDIFLSQNFTDDNRWIKIYDSNNLTFWQIDYLKG.

Belongs to the orthopoxvirus OPG091 family.

The protein localises to the virion. It is found in the host cytoplasm. Its function is as follows. Contributes to vaccinia virus virulence in mice but not to replication in cell culture. The sequence is that of Protein OPG091 (OPG091) from Homo sapiens (Human).